The chain runs to 818 residues: Protocadherin beta-1 (818 aa).

A signal peptide spans 1–28 (MAGTRRKSLQNRQVGSLLIFLCISVGDA). Residues 29–691 (TTIRYSVAEE…RKVNPSTKYL (663 aa)) lie on the Extracellular side of the membrane. Cadherin domains follow at residues 35–133 (VAEE…APVF), 138–242 (PLLK…VPQF), 243–347 (SRLV…PPEV), 348–452 (MVSS…PPIF), and 457–562 (YILT…RPMI). N169, N209, N257, and N419 each carry an N-linked (GlcNAc...) asparagine glycan. An N-linked (GlcNAc...) asparagine glycan is attached at N568. Positions 577-672 (VPRSAEAGYL…LVDGFSEPYL (96 aa)) constitute a Cadherin 6 domain. The helical transmembrane segment at 692–712 (VISLVILSFLFLLSVIVIFII) threads the bilayer. Topologically, residues 713–818 (HVYQKIKYRE…GHDQVSDDYM (106 aa)) are cytoplasmic. The segment at 789–818 (MEAGSSLPPNSDRNKSQRLEGHDQVSDDYM) is disordered. The span at 800-818 (DRNKSQRLEGHDQVSDDYM) shows a compositional bias: basic and acidic residues.

Its subcellular location is the cell membrane. Potential calcium-dependent cell-adhesion protein. May be involved in the establishment and maintenance of specific neuronal connections in the brain. The chain is Protocadherin beta-1 (PCDHB1) from Homo sapiens (Human).